The chain runs to 245 residues: MAAVSGMRRTRTVSPTRWIVYAGSVFAGAWLATQLFYLVQIALWSFINPGSTAFMRTDAWWLSRDKPPAQVQHQWVPYDQISRNLKRALIASEDSTFATNNGYDVDAILQAWEKNKARGRIVAGGSTITQQLARNLFLSREKSYIRKGQELIITWMLETVLDKERIFEIYLNSVEWGRGVYGAEAAARYYYRIPASRLGAWQSARLAVMLPKPRWFDAHRGSAYQAQRAAVIARRMGAAELPQSQ.

Residues 20–42 traverse the membrane as a helical segment; that stretch reads VYAGSVFAGAWLATQLFYLVQIA.

Belongs to the glycosyltransferase 51 family.

It is found in the cell inner membrane. It carries out the reaction [GlcNAc-(1-&gt;4)-Mur2Ac(oyl-L-Ala-gamma-D-Glu-L-Lys-D-Ala-D-Ala)](n)-di-trans,octa-cis-undecaprenyl diphosphate + beta-D-GlcNAc-(1-&gt;4)-Mur2Ac(oyl-L-Ala-gamma-D-Glu-L-Lys-D-Ala-D-Ala)-di-trans,octa-cis-undecaprenyl diphosphate = [GlcNAc-(1-&gt;4)-Mur2Ac(oyl-L-Ala-gamma-D-Glu-L-Lys-D-Ala-D-Ala)](n+1)-di-trans,octa-cis-undecaprenyl diphosphate + di-trans,octa-cis-undecaprenyl diphosphate + H(+). The protein operates within cell wall biogenesis; peptidoglycan biosynthesis. Peptidoglycan polymerase that catalyzes glycan chain elongation from lipid-linked precursors. This chain is Biosynthetic peptidoglycan transglycosylase, found in Burkholderia ambifaria (strain ATCC BAA-244 / DSM 16087 / CCUG 44356 / LMG 19182 / AMMD) (Burkholderia cepacia (strain AMMD)).